Consider the following 234-residue polypeptide: Glucosamine-6-phosphate deaminase (234 aa).

Asp63 functions as the Proton acceptor; for enolization step in the catalytic mechanism. Catalysis depends on Asn129, which acts as the For ring-opening step. The Proton acceptor; for ring-opening step role is filled by His131. Residue Glu136 is the For ring-opening step of the active site.

Belongs to the glucosamine/galactosamine-6-phosphate isomerase family. NagB subfamily.

The catalysed reaction is alpha-D-glucosamine 6-phosphate + H2O = beta-D-fructose 6-phosphate + NH4(+). The protein operates within amino-sugar metabolism; N-acetylneuraminate degradation; D-fructose 6-phosphate from N-acetylneuraminate: step 5/5. In terms of biological role, catalyzes the reversible isomerization-deamination of glucosamine 6-phosphate (GlcN6P) to form fructose 6-phosphate (Fru6P) and ammonium ion. The sequence is that of Glucosamine-6-phosphate deaminase from Listeria innocua serovar 6a (strain ATCC BAA-680 / CLIP 11262).